Reading from the N-terminus, the 501-residue chain is Chromosomal replication initiator protein DnaA (501 aa).

Residues 1-90 form a domain I, interacts with DnaA modulators region; it reads MSVELWQQCV…KRSSAPRAAP (90 aa). The interval 91–164 is domain II; the sequence is NAPLAAAASQ…QVEGALKHTS (74 aa). Over residues 103-121 the composition is skewed to low complexity; that stretch reads AAPVASTPAPAPSKSSAKK. Positions 103–150 are disordered; the sequence is AAPVASTPAPAPSKSSAKKNAAENEEPSRDSFDPMAGASSQQAPIRAE. The span at 122-134 shows a compositional bias: basic and acidic residues; sequence NAAENEEPSRDSF. Positions 165–381 are domain III, AAA+ region; that stretch reads YLNRTFTFEN…GALKRVIAHS (217 aa). Gly209, Gly211, Lys212, and Thr213 together coordinate ATP. Positions 382-501 are domain IV, binds dsDNA; it reads HFMGRDITIE…YKNLLRTLTT (120 aa).

This sequence belongs to the DnaA family. Oligomerizes as a right-handed, spiral filament on DNA at oriC.

Its subcellular location is the cytoplasm. Functionally, plays an essential role in the initiation and regulation of chromosomal replication. ATP-DnaA binds to the origin of replication (oriC) to initiate formation of the DNA replication initiation complex once per cell cycle. Binds the DnaA box (a 9 base pair repeat at the origin) and separates the double-stranded (ds)DNA. Forms a right-handed helical filament on oriC DNA; dsDNA binds to the exterior of the filament while single-stranded (ss)DNA is stabiized in the filament's interior. The ATP-DnaA-oriC complex binds and stabilizes one strand of the AT-rich DNA unwinding element (DUE), permitting loading of DNA polymerase. After initiation quickly degrades to an ADP-DnaA complex that is not apt for DNA replication. Binds acidic phospholipids. This Pseudomonas fluorescens (strain SBW25) protein is Chromosomal replication initiator protein DnaA.